The chain runs to 456 residues: Ribosomal RNA small subunit methyltransferase F (456 aa).

Residues 109-115, glutamate 133, arginine 138, and aspartate 177 each bind S-adenosyl-L-methionine; that span reads AAAPGGK. The active-site Nucleophile is cysteine 230.

Belongs to the class I-like SAM-binding methyltransferase superfamily. RsmB/NOP family.

It is found in the cytoplasm. The catalysed reaction is cytidine(1400) in 16S rRNA + S-adenosyl-L-methionine = 5-methylcytidine(1400) in 16S rRNA + S-adenosyl-L-homocysteine + H(+). It catalyses the reaction cytidine(1404) in 16S rRNA + S-adenosyl-L-methionine = 5-methylcytidine(1404) in 16S rRNA + S-adenosyl-L-homocysteine + H(+). The enzyme catalyses cytidine(1407) in 16S rRNA + S-adenosyl-L-methionine = 5-methylcytidine(1407) in 16S rRNA + S-adenosyl-L-homocysteine + H(+). Specifically methylates the cytosines at positions 1400 (m5C1400), 1404 (m5C1404) and 1407 (m5C1407) of 16S rRNA. C1400, C1404 and C1407 are methylated in a 30S subunit substrate, but only C1400 and C1404 are methylated when naked 16S rRNA is the substrate. Methylation by RsmF may facilitate growth at temperatures outside the optimal growth temperature. The sequence is that of Ribosomal RNA small subunit methyltransferase F from Thermus thermophilus (strain ATCC 27634 / DSM 579 / HB8).